The following is a 665-amino-acid chain: Coiled-coil domain-containing protein 138 (665 aa).

Position 48 is a phosphothreonine (Thr48). The residue at position 49 (Ser49) is a Phosphoserine. A coiled-coil region spans residues 198–323 (QQKFAEELQK…YEFMTIQRLK (126 aa)). Residue Ser469 is modified to Phosphoserine.

In Homo sapiens (Human), this protein is Coiled-coil domain-containing protein 138 (CCDC138).